Here is a 444-residue protein sequence, read N- to C-terminus: MRELVHIQGGQCGNQIGAKFWEVISDEHGVDPTGSYHGDSDLQLERINVYYNEATGTYVPRAILMDLEPGTMDSVRAGPYGQLFRPDNFVFGQTGAGNNWAKGHYTEGAELIDSVLDVVRKEAESCDCLQGFQITHSLGGGTGSGMGTLLISKIREEYPDRIMCTYSVCPSPKVSDTVVEPYNATLSVHQLVENADEVMCLDNEALYDICFRTLKLTNPTYGDLNHLVCAAMSGITTLLRFPGQLNSVLKLAVNLIPFPRLHFFMIGFAPLTSRGSQQYRALTVPELTQQQFDAKNMMCAADPRHGRYLTAACMFRGRMSTKEVDEQMLNVQNKNSSYFVEWIPNNIKASVCDIPPKGLKMSTTFIGNSTAIQEMFKRVSEQFTAMFRRKAFLHWYTGEGMDEMEFTEAESNMNDLVSEYQQYQDATAEEEGEFDEDEEMDEMM.

Positions 11, 68, 137, 141, 142, 143, 203, and 225 each coordinate GTP. Glutamate 68 is a Mg(2+) binding site. Residues 424–444 form a disordered region; it reads QDATAEEEGEFDEDEEMDEMM. Positions 427-444 are enriched in acidic residues; sequence TAEEEGEFDEDEEMDEMM.

This sequence belongs to the tubulin family. Dimer of alpha and beta chains. A typical microtubule is a hollow water-filled tube with an outer diameter of 25 nm and an inner diameter of 15 nM. Alpha-beta heterodimers associate head-to-tail to form protofilaments running lengthwise along the microtubule wall with the beta-tubulin subunit facing the microtubule plus end conferring a structural polarity. Microtubules usually have 13 protofilaments but different protofilament numbers can be found in some organisms and specialized cells. Mg(2+) serves as cofactor.

It is found in the cytoplasm. Its subcellular location is the cytoskeleton. Its function is as follows. Tubulin is the major constituent of microtubules, a cylinder consisting of laterally associated linear protofilaments composed of alpha- and beta-tubulin heterodimers. Microtubules grow by the addition of GTP-tubulin dimers to the microtubule end, where a stabilizing cap forms. Below the cap, tubulin dimers are in GDP-bound state, owing to GTPase activity of alpha-tubulin. This chain is Tubulin beta chain, found in Achlya klebsiana.